Consider the following 130-residue polypeptide: MTSFSTLLSVHLISIALSVGLLTLRFWLRYQKHPQAFARWTRIVPPVVDTLLLLSGIALMAKAHILPFSGQAQWLTEKLFGVIIYIVLGFIALDYRRMHSQQARIIAFPLALVVLYIIIKLATTKVPLLG.

The Periplasmic segment spans residues 1 to 9 (MTSFSTLLS). A helical membrane pass occupies residues 10–28 (VHLISIALSVGLLTLRFWL). The Cytoplasmic segment spans residues 29 to 39 (RYQKHPQAFAR). A helical membrane pass occupies residues 40–59 (WTRIVPPVVDTLLLLSGIAL). The Periplasmic segment spans residues 60 to 73 (MAKAHILPFSGQAQ). The helical transmembrane segment at 74–93 (WLTEKLFGVIIYIVLGFIAL) threads the bilayer. Residues 94-104 (DYRRMHSQQAR) are Cytoplasmic-facing. A helical membrane pass occupies residues 105-124 (IIAFPLALVVLYIIIKLATT). The Periplasmic segment spans residues 125–130 (KVPLLG).

Belongs to the SirB2 family.

Its subcellular location is the cell inner membrane. The chain is Protein YchQ (ychQ) from Escherichia coli (strain K12).